The sequence spans 172 residues: MEGYRLLYPMRTYLIVSGHGEETNVMAADWVTVVSFDPFIVGVAVAPKRTTHKLIKKYGEFVISVPSLDVLRDVWIAGTKKGPSKLKEMSVTLIPSKKVKVPSIEEALANIECRVIDARSYGDHTFFVGEVVGYTYKDYAFEKGKPNLKAKFLAHVSWSEFVTFSEKVHKAE.

The protein belongs to the flavoredoxin family. Requires FMN as cofactor.

This is an uncharacterized protein from Pyrococcus horikoshii (strain ATCC 700860 / DSM 12428 / JCM 9974 / NBRC 100139 / OT-3).